The chain runs to 664 residues: uncharacterized protein (664 aa).

This is an uncharacterized protein from Sinorhizobium fredii (strain NBRC 101917 / NGR234).